A 128-amino-acid chain; its full sequence is Large-conductance mechanosensitive channel (128 aa).

2 consecutive transmembrane segments (helical) span residues 11–31 and 70–90; these read FALK…AAFG and GAFI…FIFV.

Belongs to the MscL family. Homopentamer.

The protein localises to the cell membrane. In terms of biological role, channel that opens in response to stretch forces in the membrane lipid bilayer. May participate in the regulation of osmotic pressure changes within the cell. This is Large-conductance mechanosensitive channel from Listeria monocytogenes serotype 4b (strain CLIP80459).